The chain runs to 2602 residues: Filamin-B (2602 aa).

The segment at 1-239 is actin-binding; the sequence is MPVTEKDLAE…VMTYLSQFPK (239 aa). Calponin-homology (CH) domains follow at residues 16 to 122 and 139 to 242; these read KIQQ…LHYS and QTPK…KAKL. Threonine 216 is subject to Phosphothreonine. Residues 244–267 are disordered; that stretch reads PGAPLKPKLNPKKARAYGRGIEPT. Filamin repeat units follow at residues 249–347, 349–446, 447–543, 544–636, 640–736, 737–839, 840–938, 939–1034, 1035–1127, 1128–1222, 1223–1322, 1323–1415, 1416–1511, 1512–1608, and 1609–1704; these read KPKL…EVSV, KAQG…VVQV, GEAC…EVQV, GPEA…MAFI, TGGY…RVNI, GQGS…RVKV, DPSH…TVGV, AAPL…TVEA, SLPP…KADI, EMPF…RVKV, EPAV…KVAV, TEGC…RVPV, KDVV…KVKV, LPTY…RIRA, and TQTG…TVMA. Threonine 519 is subject to Phosphothreonine. Lysine 681 is subject to N6-acetyllysine. Serine 730 carries the phosphoserine modification. 4 positions are modified to phosphoserine: serine 886, serine 932, serine 983, and serine 1028. Residues 1128–1511 form an interaction with FBLP1 region; that stretch reads EMPFDPSKVV…IPRSPFKVKV (384 aa). Threonine 1307 is modified (phosphothreonine). Serine 1316 bears the Phosphoserine mark. Phosphoserine is present on residues serine 1433, asparagine 1474, serine 1505, and serine 1602. Residues 1705–1728 are hinge 1; it reads TDGEVTAVEEAPVNACPPGFRPWV. Filamin repeat units lie at residues 1729–1813, 1816–1908, 1919–1994, 1997–2089, 2091–2185, 2188–2280, 2282–2375, and 2379–2471; these read TEEA…SPLQ, VNYP…TAKI, KLGS…SIMV, SEIG…TVKI, GEGR…QFTV, LGEG…LVPV, APSD…KVRV, and GQAG…KAKV. N6-acetyllysine is present on lysine 1780. Residues 1862–2148 form an interaction with the cytoplasmic tail of GP1BA region; sequence SKAEISCIDN…RVTEAEIVPM (287 aa). The tract at residues 2060–2225 is interaction with FLNA 1; that stretch reads SYFPTVPGVY…IWTREAGAGG (166 aa). Phosphoserine occurs at positions 2083, 2107, and 2113. Positions 2130-2602 are interaction with INPPL1; it reads SAHVTSPSGR…PGSPFHVTVP (473 aa). Serine 2369 and serine 2465 each carry phosphoserine. A Glycyl lysine isopeptide (Lys-Gly) (interchain with G-Cter in ISG15) cross-link involves residue lysine 2468. A hinge 2 region spans residues 2472-2506; the sequence is TGQRLVSPGSANETSSILVESVTRSSTETCYSAIP. The tract at residues 2472 to 2602 is self-association site, tail; it reads TGQRLVSPGS…PGSPFHVTVP (131 aa). Phosphoserine is present on residues serine 2478, serine 2481, and serine 2492. One copy of the Filamin 24 repeat lies at 2507-2601; it reads KASSDASKVT…IPGSPFHVTV (95 aa). The interval 2507–2602 is interaction with FLNA 2; that stretch reads KASSDASKVT…PGSPFHVTVP (96 aa). 2 positions are modified to N6-succinyllysine: lysine 2518 and lysine 2524. Residue lysine 2576 is modified to N6-acetyllysine.

Belongs to the filamin family. As to quaternary structure, homodimer. Interacts with MICALL2. Interacts with RFLNA and RFLNB. Isoform 1 interacts with FBLP1, FLNA, FLNC, GP1BA, INPPL1, ITGB1A, PSEN1 and PSEN2. Isoform 3 interacts with ITGB1A, ITGB1D, ITGB3 and ITGB6. Interacts with MYOT and MYOZ1. Interacts with HBV capsid protein. Interacts with ASB2 isoform 1; the interaction targets FLNB for proteasomal degradation. ISGylation prevents ability to interact with the upstream activators of the JNK cascade and inhibits IFNA-induced JNK signaling. In terms of processing, ubiquitination by a SCF-like complex containing ASB2 isoform 1 leads to proteasomal degradation which promotes muscle differentiation. Ubiquitous. Isoform 1 and isoform 2 are expressed in placenta, bone marrow, brain, umbilical vein endothelial cells (HUVEC), retina and skeletal muscle. Isoform 1 is predominantly expressed in prostate, uterus, liver, thyroid, stomach, lymph node, small intestine, spleen, skeletal muscle, kidney, placenta, pancreas, heart, lung, platelets, endothelial cells, megakaryocytic and erythroleukemic cell lines. Isoform 2 is predominantly expressed in spinal cord, platelet and Daudi cells. Also expressed in thyroid adenoma, neurofibrillary tangles (NFT), senile plaques in the hippocampus and cerebral cortex in Alzheimer disease (AD). Isoform 3 and isoform 6 are expressed predominantly in lung, heart, skeletal muscle, testis, spleen, thymus and leukocytes. Isoform 4 and isoform 5 are expressed in heart.

Its subcellular location is the cytoplasm. The protein localises to the cell cortex. The protein resides in the cytoskeleton. It is found in the stress fiber. It localises to the myofibril. Its subcellular location is the sarcomere. The protein localises to the z line. Its function is as follows. Connects cell membrane constituents to the actin cytoskeleton. May promote orthogonal branching of actin filaments and links actin filaments to membrane glycoproteins. Anchors various transmembrane proteins to the actin cytoskeleton. Interaction with FLNA may allow neuroblast migration from the ventricular zone into the cortical plate. Various interactions and localizations of isoforms affect myotube morphology and myogenesis. Isoform 6 accelerates muscle differentiation in vitro. The chain is Filamin-B (FLNB) from Homo sapiens (Human).